Consider the following 429-residue polypeptide: Tol-Pal system protein TolB (429 aa).

A signal peptide spans 1–22; that stretch reads MTRRLFILITIMLCLIPALLHS. 2 disordered regions span residues 362-383 and 407-429; these read PDGT…RWSP and GSGQ…SPRW. Positions 363–374 are enriched in polar residues; the sequence is DGTNDTRLTSEG.

The protein belongs to the TolB family. The Tol-Pal system is composed of five core proteins: the inner membrane proteins TolA, TolQ and TolR, the periplasmic protein TolB and the outer membrane protein Pal. They form a network linking the inner and outer membranes and the peptidoglycan layer.

The protein resides in the periplasm. Functionally, part of the Tol-Pal system, which plays a role in outer membrane invagination during cell division and is important for maintaining outer membrane integrity. The chain is Tol-Pal system protein TolB from Geobacter metallireducens (strain ATCC 53774 / DSM 7210 / GS-15).